The primary structure comprises 103 residues: UPF0145 protein pXO2-45/BXB0052/GBAA_pXO2_0052 (103 aa).

This sequence belongs to the UPF0145 family.

The protein is UPF0145 protein pXO2-45/BXB0052/GBAA_pXO2_0052 of Bacillus anthracis.